Consider the following 85-residue polypeptide: Small ribosomal subunit protein bS16c (85 aa).

Belongs to the bacterial ribosomal protein bS16 family.

The protein resides in the plastid. It localises to the chloroplast. The polypeptide is Small ribosomal subunit protein bS16c (Agrostis stolonifera (Creeping bentgrass)).